Reading from the N-terminus, the 642-residue chain is AEKIKICLQKQVNSSFSLHNGFGGNLYATEEKRMFELVKPKAGASVLNQSTWIGFGDSRTDKSNSAFPRSADVSEKTADKFRSLSGGSLMLSMFGPPGKVDYLYQGCGKHKVFYEGVNWSPHAAINCYRKNWTDIKLNFQKNIYELASQSHCMSLVNALDKTIPLQVTAGVAKNCNNSFLKNPALYTQEVNPSKEICGKENLAFFTLPTQFGTYECKLHLVASCYFIYDSKEVYNKRGCDNYFQVIYDSSGKVVGGLDNRVSPYTGNTGDTPTMQCDMLQLKPGRYSVRSSPRFLLMPERSYCFDMKEKGLVTAVQSVWGKGRESDHAVDQAYLSTPGCMLIQKQKPYIGEADDHHGDQEMRELLSGLDYEARCISQSGWVNETSPFTEEYLLPPKFGRCPLAAKEESIPKIPDGLLIPTSGTDTIVTKPKSRIFGIDDLIIGLLFVAIVEAGIGGYLLGSRKESGGGVTKESAEKGFEKIGNDIQILRSSTNIAIEKLNDRITHDEQAIRDLTLEIENARSEALLGELGIIRALLVGNISIGLQESLWELASEITNRAGDLAVEVSPGCWIIDNNICDQSCQNFIFKFNETAPVPTIPPLDTKIDLQSDPFYWGSSLGLAITTPISLAALVISGIAICRTK.

Residues 1–617 (AEKIKICLQK…QSDPFYWGSS (617 aa)) are Extracellular-facing. N-linked (GlcNAc...) asparagine; by host glycosylation is found at Asn-13, Asn-48, Asn-131, and Asn-176. The N-acetyl-9-O-acetylneuraminic acid binding stretch occupies residues 83 to 297 (SLSGGSLMLS…VRSSPRFLLM (215 aa)). Disulfide bonds link Cys-197/Cys-239, Cys-216/Cys-303, and Cys-224/Cys-276. The tract at residues 297–351 (MPERSYCFDMKEKGLVTAVQSVWGKGRESDHAVDQAYLSTPGCMLIQKQKPYIGE) is esterase domain-2. The tract at residues 352 to 637 (ADDHHGDQEM…LAALVISGIA (286 aa)) is fusion domain-2. Catalysis depends on charge relay system residues Asp-353 and His-356. N-linked (GlcNAc...) asparagine; by host glycans are attached at residues Asn-382, Asn-539, and Asn-590. The chain crosses the membrane as a helical span at residues 618–638 (LGLAITTPISLAALVISGIAI). Residues 639–642 (CRTK) lie on the Cytoplasmic side of the membrane.

This sequence belongs to the influenza viruses hemagglutinin family. Homotrimer of disulfide-linked HEF1-HEF2. In natural infection, inactive HEF is matured into HEF1 and HEF2 outside the cell by one or more trypsin-like, arginine-specific endoprotease.

The protein resides in the virion membrane. It is found in the host cell membrane. The enzyme catalyses N-acetyl-9-O-acetylneuraminate + H2O = N-acetylneuraminate + acetate + H(+). It carries out the reaction N-acetyl-4-O-acetylneuraminate + H2O = N-acetylneuraminate + acetate + H(+). Its function is as follows. Binds to the N-acetyl-9-O-acetylneuraminic acid residues on the cell surface, bringing about the attachment of the virus particle to the cell. Plays a major role in the determination of host range restriction and virulence. Class I viral fusion protein. Responsible for penetration of the virus into the cell cytoplasm by mediating the fusion of the membrane of the endocytosed virus particle with the endosomal membrane. Low pH in endosomes induce an irreversible conformational change in HEF2, releasing the fusion hydrophobic peptide. Several trimers are required to form a competent fusion pore. Displays a receptor-destroying activity which is a neuraminidate-O-acetyl esterase. This activity cleaves off any receptor on the cell surface, which would otherwise prevent virions release. These cleavages prevent self-aggregation and ensure the efficient spread of the progeny virus from cell to cell. In Influenza C virus (strain C/Taylor/1233/1947), this protein is Hemagglutinin-esterase-fusion glycoprotein.